Consider the following 338-residue polypeptide: Ketol-acid reductoisomerase (NADP(+)) (338 aa).

Residues 1 to 181 form the KARI N-terminal Rossmann domain; it reads MKVFYDKDCD…GGGKAGIIET (181 aa). NADP(+)-binding positions include 24-27, Arg-47, and Ser-52; that span reads YGSQ. His-107 is a catalytic residue. Gly-133 contributes to the NADP(+) binding site. A KARI C-terminal knotted domain is found at 182–327; that stretch reads NFREETETDL…EKLRAMMPWI (146 aa). Mg(2+) contacts are provided by Asp-190, Glu-194, Glu-226, and Glu-230. Ser-251 serves as a coordination point for substrate.

Belongs to the ketol-acid reductoisomerase family. Requires Mg(2+) as cofactor.

It catalyses the reaction (2R)-2,3-dihydroxy-3-methylbutanoate + NADP(+) = (2S)-2-acetolactate + NADPH + H(+). The catalysed reaction is (2R,3R)-2,3-dihydroxy-3-methylpentanoate + NADP(+) = (S)-2-ethyl-2-hydroxy-3-oxobutanoate + NADPH + H(+). Its pathway is amino-acid biosynthesis; L-isoleucine biosynthesis; L-isoleucine from 2-oxobutanoate: step 2/4. It participates in amino-acid biosynthesis; L-valine biosynthesis; L-valine from pyruvate: step 2/4. In terms of biological role, involved in the biosynthesis of branched-chain amino acids (BCAA). Catalyzes an alkyl-migration followed by a ketol-acid reduction of (S)-2-acetolactate (S2AL) to yield (R)-2,3-dihydroxy-isovalerate. In the isomerase reaction, S2AL is rearranged via a Mg-dependent methyl migration to produce 3-hydroxy-3-methyl-2-ketobutyrate (HMKB). In the reductase reaction, this 2-ketoacid undergoes a metal-dependent reduction by NADPH to yield (R)-2,3-dihydroxy-isovalerate. In Polaromonas sp. (strain JS666 / ATCC BAA-500), this protein is Ketol-acid reductoisomerase (NADP(+)).